Here is a 286-residue protein sequence, read N- to C-terminus: Phosphatidylglycerol--prolipoprotein diacylglyceryl transferase (286 aa).

7 consecutive transmembrane segments (helical) span residues 29 to 49, 66 to 86, 101 to 121, 130 to 150, 181 to 201, 209 to 229, and 250 to 270; these read IHWYGLMYLFGFILCWAVGTY, LVFYVAMGVVLGGRCGYVFFY, VWEGGMSFHGGLLGVILAMML, FLDLMDFVAPLVPIGLGLGRI, PSQLYQAALEGLVLFAVLFWF, AAVASLFLILYGCFRFAVEFV, and LSLPMIIIGALIFFYAYRHPA. Residue R149 participates in a 1,2-diacyl-sn-glycero-3-phospho-(1'-sn-glycerol) binding.

It belongs to the Lgt family.

It localises to the cell inner membrane. It catalyses the reaction L-cysteinyl-[prolipoprotein] + a 1,2-diacyl-sn-glycero-3-phospho-(1'-sn-glycerol) = an S-1,2-diacyl-sn-glyceryl-L-cysteinyl-[prolipoprotein] + sn-glycerol 1-phosphate + H(+). Its pathway is protein modification; lipoprotein biosynthesis (diacylglyceryl transfer). Catalyzes the transfer of the diacylglyceryl group from phosphatidylglycerol to the sulfhydryl group of the N-terminal cysteine of a prolipoprotein, the first step in the formation of mature lipoproteins. The sequence is that of Phosphatidylglycerol--prolipoprotein diacylglyceryl transferase from Teredinibacter turnerae (strain ATCC 39867 / T7901).